Consider the following 65-residue polypeptide: Large ribosomal subunit protein uL29 (65 aa).

The protein belongs to the universal ribosomal protein uL29 family.

The protein is Large ribosomal subunit protein uL29 of Delftia acidovorans (strain DSM 14801 / SPH-1).